The primary structure comprises 325 residues: 5-dehydro-2-deoxygluconokinase (325 aa).

The protein belongs to the carbohydrate kinase PfkB family.

It catalyses the reaction 5-dehydro-2-deoxy-D-gluconate + ATP = 6-phospho-5-dehydro-2-deoxy-D-gluconate + ADP + H(+). It functions in the pathway polyol metabolism; myo-inositol degradation into acetyl-CoA; acetyl-CoA from myo-inositol: step 5/7. Its function is as follows. Catalyzes the phosphorylation of 5-dehydro-2-deoxy-D-gluconate (2-deoxy-5-keto-D-gluconate or DKG) to 6-phospho-5-dehydro-2-deoxy-D-gluconate (DKGP). The protein is 5-dehydro-2-deoxygluconokinase of Listeria monocytogenes serotype 4a (strain HCC23).